Here is a 494-residue protein sequence, read N- to C-terminus: Aldehyde dehydrogenase family 7 member A1 (494 aa).

Position 247–252 (247–252) interacts with NAD(+); that stretch reads GSSKVG. Residue glutamate 269 is the Proton acceptor of the active site. Residue cysteine 303 is the Nucleophile of the active site.

The protein belongs to the aldehyde dehydrogenase family. Homotetramer.

The catalysed reaction is an aldehyde + NAD(+) + H2O = a carboxylate + NADH + 2 H(+). In Brassica napus (Rape), this protein is Aldehyde dehydrogenase family 7 member A1 (BTG-26).